A 104-amino-acid chain; its full sequence is Ribonucleotide reductase inhibitor protein SML1 (104 aa).

Residue M1 is modified to N-acetylmethionine. Positions 43-62 (PMLSTQNSMGSSASASASSL) are disordered. Residues S56, S58, and S60 each carry the phosphoserine; by DUN1 modification.

In terms of assembly, homodimer; disulfide-linked. Interacts with RNR1. In terms of processing, phosphorylated by DUN1, a downstream effector of the Mec1/Rad53 checkpoint pathway, in response to DNA damage. This promotes ubiquitination of SML1 and targets it for degradation by the 26S proteasome.

It is found in the nucleus. Its subcellular location is the cytoplasm. Strong inhibitor of ribonucleotide reductase (RNR1) and is involved in regulating dNTP production. The chain is Ribonucleotide reductase inhibitor protein SML1 (SML1) from Saccharomyces cerevisiae (strain ATCC 204508 / S288c) (Baker's yeast).